We begin with the raw amino-acid sequence, 947 residues long: ATPase 10, plasma membrane-type (947 aa).

The Cytoplasmic portion of the chain corresponds to 1–69; that stretch reads MAEDLDKPLL…EKQENRFVKF (69 aa). The chain crosses the membrane as a helical span at residues 70-89; it reads LGFMWNPLSWVMEAAALMAI. Over 90–101 the chain is Extracellular; sequence ALANSQSLGPDW. The helical transmembrane segment at 102–122 threads the bilayer; the sequence is EDFTGIVCLLLINATISFFEE. The Cytoplasmic segment spans residues 123 to 251; that stretch reads NNAGNAAAAL…GHFQQVLTSI (129 aa). Residues 252–272 traverse the membrane as a helical segment; it reads GNFCICSIAVGMVLEIIIMFP. Topologically, residues 273 to 281 are extracellular; it reads VQHRSYRIG. A helical transmembrane segment spans residues 282–299; that stretch reads INNLLVLLIGGIPIAMPT. The Cytoplasmic portion of the chain corresponds to 300–650; the sequence is VLSVTLAIGS…TSRAIFQRMR (351 aa). The active-site 4-aspartylphosphate intermediate is aspartate 337. The Mg(2+) site is built by aspartate 595 and aspartate 599. The chain crosses the membrane as a helical span at residues 651–672; sequence NYTVYAVSITIRIVLGFTLLAL. Residues 673 to 677 lie on the Extracellular side of the membrane; sequence IWEYD. Residues 678–700 traverse the membrane as a helical segment; that stretch reads FPPFMVLIIAILNDGTIMTISKD. Residues 701-716 are Cytoplasmic-facing; it reads RVRPSPTPESWKLNQI. A helical transmembrane segment spans residues 717-737; it reads FATGIVIGTYLALVTVLFYWI. Residues 738 to 758 lie on the Extracellular side of the membrane; it reads IVSTTFFEKHFHVKSIANNSE. The helical transmembrane segment at 759-779 threads the bilayer; sequence QVSSAMYLQVSIISQALIFVT. Residues 780 to 791 are Cytoplasmic-facing; that stretch reads RSRGWSFFERPG. Residues 792 to 812 traverse the membrane as a helical segment; it reads TLLIFAFILAQLAATLIAVYA. Residues 813–820 lie on the Extracellular side of the membrane; it reads NISFAKIT. The chain crosses the membrane as a helical span at residues 821 to 841; that stretch reads GIGWRWAGVIWLYSLIFYIPL. The Cytoplasmic segment spans residues 842 to 947; the sequence is DVIKFVFHYA…QRMIRAAHTV (106 aa). Residues serine 897 and serine 929 each carry the phosphoserine modification. The residue at position 946 (threonine 946) is a Phosphothreonine.

The protein belongs to the cation transport ATPase (P-type) (TC 3.A.3) family. Type IIIA subfamily. As to expression, found primarily in developing seeds. Expressed in guard cells, mesophyll cells, leaves and roots.

It is found in the membrane. It catalyses the reaction ATP + H2O + H(+)(in) = ADP + phosphate + 2 H(+)(out). The plasma membrane H(+) ATPase of plants and fungi generates a proton gradient that drives the active transport of nutrients by H(+)-symport. The resulting external acidification and/or internal alkinization may mediate growth responses. The chain is ATPase 10, plasma membrane-type (AHA10) from Arabidopsis thaliana (Mouse-ear cress).